An 809-amino-acid chain; its full sequence is LPS-assembly protein LptD (809 aa).

A signal peptide spans 1 to 22 (MRRALRLLPLPLSIAICLPAMA).

The protein belongs to the LptD family. Component of the lipopolysaccharide transport and assembly complex. Interacts with LptE and LptA.

The protein resides in the cell outer membrane. In terms of biological role, together with LptE, is involved in the assembly of lipopolysaccharide (LPS) at the surface of the outer membrane. The chain is LPS-assembly protein LptD from Xanthomonas euvesicatoria pv. vesicatoria (strain 85-10) (Xanthomonas campestris pv. vesicatoria).